A 301-amino-acid chain; its full sequence is Oxygen-dependent coproporphyrinogen-III oxidase (301 aa).

Residue serine 90 coordinates substrate. Residues histidine 94 and histidine 104 each coordinate a divalent metal cation. The active-site Proton donor is the histidine 104. 106–108 (NVR) serves as a coordination point for substrate. Histidine 143 and histidine 173 together coordinate a divalent metal cation. Residues 238–273 (YVEFNLVWDRGTLFGLQSGGRTESILMSLPPVVKWR) are important for dimerization. Substrate is bound at residue 256–258 (GGR).

The protein belongs to the aerobic coproporphyrinogen-III oxidase family. As to quaternary structure, homodimer. The cofactor is a divalent metal cation.

Its subcellular location is the cytoplasm. The enzyme catalyses coproporphyrinogen III + O2 + 2 H(+) = protoporphyrinogen IX + 2 CO2 + 2 H2O. It participates in porphyrin-containing compound metabolism; protoporphyrin-IX biosynthesis; protoporphyrinogen-IX from coproporphyrinogen-III (O2 route): step 1/1. In terms of biological role, involved in the heme biosynthesis. Catalyzes the aerobic oxidative decarboxylation of propionate groups of rings A and B of coproporphyrinogen-III to yield the vinyl groups in protoporphyrinogen-IX. The polypeptide is Oxygen-dependent coproporphyrinogen-III oxidase (Nitrosomonas europaea (strain ATCC 19718 / CIP 103999 / KCTC 2705 / NBRC 14298)).